Consider the following 272-residue polypeptide: MQLRITSRKKFTVLLCALGLISIVAIYPRQTVNFFYSTAIQIKDYIHFYGYRPVKSFAIRIPASYTIHGIDVSRWQERIDWQRVAKMRDNGIRLQFAFIKATEGEKLVDPYFSRNWQLSRENGLLRGAYHYFSPSVSASVQARLFLQTVDFSQGDFPAVLDVEERGKLSAKELRKRVSQWLKMVEKRTGKKPIIYSGAVFYHTNLAGYFNEYPWWVAHYYQRRPDNDGMAWRFWQHSDRGQVDGINGPVDFNVFNGTVEELQGFVDGIKETP.

Catalysis depends on residues D71 and E163.

The protein belongs to the glycosyl hydrolase 25 family.

This is an uncharacterized protein from Escherichia coli O6:H1 (strain CFT073 / ATCC 700928 / UPEC).